The following is a 484-amino-acid chain: MGKALMVQGTSSGAGKSLLVMALCRIFSNLGYDVVPFKSQNMSLNSAPSIEGGEISRAQYLQAVACRKKPSVRFNPILLKPEGNMRSQVVFMGKPIGSVSAREYMLSRKEELFRKAMKVLDELMVEHEIVIIEGAGSPVEINLKDYDIANMRVARHAKAKTILVTDIDRGGSFASIVGTMELLSKEERNLILGFVFNKFRGDASLLEPGFEYLEKRYGKPTLGVVPCIEHKLPEEDSLTSFPKVNGELHIQIVKLPHISNFTDFEPLHWANGVDYVTKAEEIEGDLIIIPGSKNTVEDLLWMRENGIEDAIIQAHHEGSFVVGICGGFQMLGEKIIDNVESKRGEVKGIGLLPAKTIFTPVKRTNHLKAEILWEPAKRMSVEGYEIRMGRSTSERPFSIIREINGAKAFEPEGALGERTFGTYLHGIFHNFAFTERLLNFLRAEKGLEPISVGGWSIEEEIERFARVVEKNLDVGYIISELGLG.

The 187-residue stretch at 247–433 (ELHIQIVKLP…LHGIFHNFAF (187 aa)) folds into the GATase cobBQ-type domain. Cysteine 325 functions as the Nucleophile in the catalytic mechanism. Histidine 425 is an active-site residue.

It belongs to the CobB/CobQ family. CobQ subfamily.

Its pathway is cofactor biosynthesis; adenosylcobalamin biosynthesis. Catalyzes amidations at positions B, D, E, and G on adenosylcobyrinic A,C-diamide. NH(2) groups are provided by glutamine, and one molecule of ATP is hydrogenolyzed for each amidation. The sequence is that of Probable cobyric acid synthase from Thermococcus onnurineus (strain NA1).